Here is a 406-residue protein sequence, read N- to C-terminus: Calreticulin (406 aa).

The signal sequence occupies residues 1-17 (MMWCKTVIVLLATVGFI). A disulfide bond links C105 and C137. An alpha-D-glucoside is bound by residues Y109, K111, Y128, and D135. A run of 7 repeats spans residues 191–202 (VESGNLEDDWDF), 210–221 (DPTATKPEDWDD), 227–238 (DPDDKKPEDWDK), 244–255 (DPDATKPEDWDD), 259–269 (GEWEPPMIDNP), 273–283 (GEWQPKQLDNP), and 287–297 (GAWEHPEIANP). The 4 X approximate repeats stretch occupies residues 191 to 255 (VESGNLEDDW…DATKPEDWDD (65 aa)). Basic and acidic residues predominate over residues 207 to 251 (KIKDPTATKPEDWDDRATIPDPDDKKPEDWDKPEHIPDPDATKPE). The interval 207–259 (KIKDPTATKPEDWDDRATIPDPDDKKPEDWDKPEHIPDPDATKPEDWDDEMDG) is disordered. The segment at 259 to 297 (GEWEPPMIDNPEFKGEWQPKQLDNPNYKGAWEHPEIANP) is 3 X approximate repeats. D317 serves as a coordination point for an alpha-D-glucoside. Positions 347–406 (KNTQAGEKKMKEAQDEVQRKKDEEEAKKASDKDDEDEDDDDEEKDDESKQDKDQSEHDEL) are disordered. Basic and acidic residues predominate over residues 352–377 (GEKKMKEAQDEVQRKKDEEEAKKASD). Over residues 378–391 (KDDEDEDDDDEEKD) the composition is skewed to acidic residues. Basic and acidic residues predominate over residues 392 to 406 (DESKQDKDQSEHDEL).

It belongs to the calreticulin family.

The protein resides in the endoplasmic reticulum lumen. Molecular calcium-binding chaperone promoting folding, oligomeric assembly and quality control in the ER via the calreticulin/calnexin cycle. This lectin may interact transiently with almost all of the monoglucosylated glycoproteins that are synthesized in the ER. This Drosophila melanogaster (Fruit fly) protein is Calreticulin.